The primary structure comprises 159 residues: Eukaryotic translation initiation factor 5A-2 (159 aa).

The span at 1–10 (MSDEEHHFEP) shows a compositional bias: basic and acidic residues. Residues 1 to 21 (MSDEEHHFEPAADAGASKTYP) are disordered. Residue K52 is modified to Hypusine.

This sequence belongs to the eIF-5A family. Lys-52 undergoes hypusination, a unique post-translational modification that consists in the addition of a butylamino group from spermidine to lysine side chain, leading to the formation of the unusual amino acid hypusine. eIF-5As are the only known proteins to undergo this modification, which is essential for their function.

Functionally, translation factor that promotes translation elongation and termination, particularly upon ribosome stalling at specific amino acid sequence contexts. Binds between the exit (E) and peptidyl (P) site of the ribosome and promotes rescue of stalled ribosome: specifically required for efficient translation of polyproline-containing peptides as well as other motifs that stall the ribosome. Acts as a ribosome quality control (RQC) cofactor by joining the RQC complex to facilitate peptidyl transfer during CAT tailing step. This chain is Eukaryotic translation initiation factor 5A-2, found in Medicago sativa (Alfalfa).